We begin with the raw amino-acid sequence, 400 residues long: WW domain-containing transcription regulator protein 1 (400 aa).

Lys-46 participates in a covalent cross-link: Glycyl lysine isopeptide (Lys-Gly) (interchain with G-Cter in ubiquitin). The disordered stretch occupies residues 52-117; sequence FFKEPDSGSH…QQHAHLRQQS (66 aa). Over residues 61–70 the composition is skewed to polar residues; sequence HSRQSSTDSS. 2 positions are modified to phosphoserine: Ser-62 and Ser-89. Over residues 91-110 the composition is skewed to low complexity; the sequence is PASLQLGPGAGAAGSPAQQH. Residues 124 to 157 enclose the WW domain; that stretch reads LPLPPGWEMTFTATGQRYFLNHIEKITTWQDPRK. Positions 192–211 are enriched in polar residues; that stretch reads NHQHQQQMAPTNLSQQNHPT. The tract at residues 192–216 is disordered; sequence NHQHQQQMAPTNLSQQNHPTQNPPA. Residues 222 to 400 form a required for interaction with PALS1 region; that stretch reads PNALTTQQQQ…NKSEPFLTWL (179 aa). Phosphoserine is present on residues Ser-295 and Ser-311. The PDZ-binding signature appears at 394–400; that stretch reads EPFLTWL.

As to quaternary structure, binds to SLC9A3R2 via the PDZ motif at the plasma membrane. Binds to YWHAZ in vivo and in vitro through the phosphoserine-binding motif RSHSSP. Interacts (via coiled-coil domain) with SMAD2 (via MH1 domain), SMAD3 and SMAD4. Interacts with MED15. Interacts with PAX8 and NKX2-1. Interacts with TEAD1, TEAD2, TEAD3 and TEAD4. Interacts (via WW domain) with PALS1. Interacts with LATS1. Interacts with YAP1 (when phosphorylated at 'Ser-112'). Interacts (via WW domain) with PRRG4 (via cytoplasmic domain). Interacts (via WW domain) with AMOTL2 (via PPXY motif); the interaction promotes WWTR1/TAZ localization to the cytoplasm and tight junctions, thereby inhibiting its transcriptional coactivator properties. Interacts (via WW domain) with AMOT; the interaction facilitates translocation of WWTR1/TAZ to the cytoplasm. Phosphorylated by LATS2 and STK3/MST2. Phosphorylation by LATS2 results in creation of 14-3-3 binding sites, retention in the cytoplasm, and functional inactivation. Phosphorylation results in the inhibition of transcriptional coactivation through YWHAZ-mediated nuclear export. In terms of processing, ubiquitinated at Lys-46; leading to proteasomal degradation. Deubiquitinated and stabilized by UCHL1 at Lys-46; leading to inhibition of osteoclastogenesis.

It localises to the cytoplasm. The protein localises to the nucleus. Its subcellular location is the cell membrane. The protein resides in the cell junction. It is found in the tight junction. Transcriptional coactivator which acts as a downstream regulatory target in the Hippo signaling pathway that plays a pivotal role in organ size control and tumor suppression by restricting proliferation and promoting apoptosis. The core of this pathway is composed of a kinase cascade wherein STK3/MST2 and STK4/MST1, in complex with its regulatory protein SAV1, phosphorylates and activates LATS1/2 in complex with its regulatory protein MOB1, which in turn phosphorylates and inactivates YAP1 oncoprotein and WWTR1/TAZ. WWTR1 enhances PAX8 and NKX2-1/TTF1-dependent gene activation. In conjunction with YAP1, involved in the regulation of TGFB1-dependent SMAD2 and SMAD3 nuclear accumulation. Plays a key role in coupling SMADs to the transcriptional machinery such as the mediator complex. Regulates embryonic stem-cell self-renewal, promotes cell proliferation and epithelial-mesenchymal transition. This Canis lupus familiaris (Dog) protein is WW domain-containing transcription regulator protein 1.